A 166-amino-acid chain; its full sequence is Emerin homolog 1 (166 aa).

In terms of domain architecture, LEM spans 1-44; it reads MDVSQLTDAELRDSLKSHGVSVGPIVATTRKLYEKKLIKLSDGS. At 1 to 127 the chain is on the nuclear side; that stretch reads MDVSQLTDAE…QAQSNKGGFL (127 aa). Residues 62-99 are disordered; it reads IISSSPKKSPPQRVFQNVSAATAAATTSPESDSDDCEE. A helical membrane pass occupies residues 128–148; it reads GSTITFTILFVFIAVFAYFLI. Topologically, residues 149 to 166 are perinuclear space; it reads ENAEQLKLVAETNPEDTI.

Interacts with lmn-1 and baf-1. Ubiquitous. Expressed in all cells, except in cells undergoing spermatogenesis. High expression in hypodermis, neurons, pharyngeal muscle, body wall muscle and gonadal sheath.

It localises to the nucleus inner membrane. The protein localises to the nucleus envelope. In terms of biological role, nuclear lamina-associated inner nuclear membrane protein that is involved in cell division, nuclear structure organization, maintenance of nuclear envelope integrity and nuclear envelope reformation after mitosis. Involved in chromosome segregation and cell division, probably via its interaction with the nuclear intermediate filament protein lmn-1, the main component of nuclear lamina. Required to organize the distribution of lmn-1, nuclear pore complexes (NPCs) and chromatin in mitotically active cells. Together with lem-2, plays a role in baf-1 enrichment at the nuclear envelope in anaphase. Together with lem-2, involved in muscle cell attachment to hypodermal cells, as well as muscle cell location and sarcomere organization. May play a role in radiation-induced DNA damage repair response. May repress binding of transcription factor pha-4 with target sequences in pharyngeal cells. The polypeptide is Emerin homolog 1 (emr-1) (Caenorhabditis elegans).